A 1529-amino-acid polypeptide reads, in one-letter code: ABC multidrug transporter AFR2 (1529 aa).

Positions 1 to 10 are enriched in gly residues; sequence MAFAGVGQGL. Positions 1 to 21 are disordered; it reads MAFAGVGQGLGTYDRTEQTSG. The ABC transporter 1 domain maps to 144–394; sequence GALRDLISNR…FVDMGFHCPS (251 aa). Residues Asn-235 and Asn-318 are each glycosylated (N-linked (GlcNAc...) asparagine). Helical transmembrane passes span 505–525, 539–559, 589–609, 614–634, and 648–668; these read LTLT…SVFY, ALLF…ILIL, IPYK…MTNL, GPYF…SMLF, and LAPA…AVNV. The N-linked (GlcNAc...) asparagine glycan is linked to Asn-742. Residues 757–777 traverse the membrane as a helical segment; that stretch reads GILIGFFLFFTAIYMTATEFI. Residues 845–1087 form the ABC transporter 2 domain; sequence FSWKDVVYDI…ILIDYFEKNG (243 aa). ATP is bound at residue 881 to 888; the sequence is GVSGAGKT. The next 5 helical transmembrane spans lie at 1193-1213, 1227-1247, 1268-1288, 1314-1334, and 1353-1373; these read YIWS…FSFF, FSVF…MPNF, IFIL…GAVI, LMFL…IMIV, and MCLI…FWMF. Asn-1434 carries N-linked (GlcNAc...) asparagine glycosylation. The chain crosses the membrane as a helical span at residues 1465 to 1485; sequence FGLLWAYVVFNIIAAVGIYWL. Residues 1493 to 1529 are disordered; that stretch reads GKEQASEPEGVQEKLVPAQSSEKKRESVSRGSESTAA.

Belongs to the ABC transporter superfamily. ABCG family. PDR (TC 3.A.1.205) subfamily.

It is found in the cell membrane. It catalyses the reaction itraconazole(in) + ATP + H2O = itraconazole(out) + ADP + phosphate + H(+). The enzyme catalyses voriconazole(in) + ATP + H2O = voriconazole(out) + ADP + phosphate + H(+). The catalysed reaction is fluconazole(in) + ATP + H2O = fluconazole(out) + ADP + phosphate + H(+). Functionally, pleiotropic ABC efflux transporter that confers resistance to structurally and functionally unrelated compounds including azoles such as fluconazole (FLC), itraconazole (ITC), posaconazole (POS), and voriconazole (VRC). This Cryptococcus neoformans var. grubii serotype A (strain H99 / ATCC 208821 / CBS 10515 / FGSC 9487) (Filobasidiella neoformans var. grubii) protein is ABC multidrug transporter AFR2.